The chain runs to 172 residues: HTH-type transcriptional regulator IscR (172 aa).

The 130-residue stretch at 2-131 folds into the HTH rrf2-type domain; that stretch reads RLTSKGRYAV…NNITLGELMR (130 aa). A DNA-binding region (H-T-H motif) is located at residues 28–51; sequence LADISERQGISLSYLEQLFSRLRK. [2Fe-2S] cluster is bound by residues Cys-92, Cys-98, and Cys-104.

[2Fe-2S] cluster serves as cofactor.

Functionally, regulates the transcription of several operons and genes involved in the biogenesis of Fe-S clusters and Fe-S-containing proteins. The polypeptide is HTH-type transcriptional regulator IscR (Photobacterium profundum (strain SS9)).